The chain runs to 519 residues: MTSAEMTSPNNNSEHQAIAKMRTMIEGFDDISHGGLPIGRSTLVSGTSGTGKTLFSIQFLYNGIIEFDEPGVFVTFEETPQDIIKNARSFGWDLAKLVDEGKLFILDASPDPEGQEVVGGFDLSALIERINYAIQKYRARRVSIDSVTSVFQQYDASSVVRRELFRLVARLKQIGATTVMTTERIEEYGPIARYGVEEFVSDNVVILRNVLEGERRRRTLEILKLRGTSHMKGEYPFTITDHGINIFPLGAMRLTQRSSNVRVSSGVVRLDEMCGGGFFKDSIILATGATGTGKTLLVSRFVENACANKERAILFAYEESRAQLLRNAYSWGMDFEEMERQNLLKIVCAYPESAGLEDHLQIIKSEINDFKPARIAIDSLSALARGVSNNAFRQFVIGVTGYAKQEEITGLFTNTSDQFMGAHSITDSHISTITDTIILLQYVEIRGEMSRAINVFKMRGSWHDKAIREFMISDKGPDIKDSFRNFERIISGSPTRITVDEKSELSRIVRGVQEKGPES.

A KaiC 1 domain is found at 1-247; it reads MTSAEMTSPN…TITDHGINIF (247 aa). 6 residues coordinate ATP: Gly49, Thr50, Gly51, Lys52, Thr53, and Leu54. Thr53 serves as a coordination point for Mg(2+). Glu77 (proton acceptor in CI (KaiC 1)) is an active-site residue. Ser89 lines the ATP pocket. Positions 115-122 are B-loop, required to bind KaiB and SasA; sequence QEVVGGFD. ATP-binding residues include Lys224, Leu225, Arg226, Thr228, His230, Thr240, and Asp241. A linker region spans residues 248–260; it reads PLGAMRLTQRSSN. One can recognise a KaiC 2 domain in the interval 261 to 519; it reads VRVSSGVVRL…RGVQEKGPES (259 aa). ATP is bound by residues Thr290, Gly291, Thr292, Gly293, Lys294, Thr295, and Leu296. Thr295 lines the Mg(2+) pocket. A Mg(2+)-binding site is contributed by Glu318. The Proton acceptor in CII (KaiC 2) role is filled by Glu318. Residue Trp331 coordinates ATP. The residue at position 431 (Ser431) is a Phosphoserine; by autocatalysis. Thr432 is modified (phosphothreonine; by autocatalysis). Positions 451, 457, 458, 459, 461, 463, and 465 each coordinate ATP. The interval 488-497 is A-loop, interacts with KaiA; that stretch reads RIISGSPTRI.

This sequence belongs to the KaiC family. Homohexamer resembling 2 stacked donuts with a central pore nearly blocked on one side; hexamerization is dependent on ATP-binding. Binds 12 ATP; 6 between each subunit in both layers. KaiB only binds to phospho-Ser-431 KaiC (not doubly phosphorylated KaiC). Complex formation between KaiB and KaiC is regulated by the phosphorylation state of KaiC and by an ATP hydrolysis-driven conformation change in the CI ring of KaiC; complex formation is slow. Slow complex formation is crucial for the timing of the circadian period. KaiB switches to a thioredoxin-like form called KaiB(fs) when bound to KaiC. The KaiABC complex composition changes during the circadian cycle to control KaiC phosphorylation. Complexes KaiC(6), KaiA(2-4):KaiC(6), KaiB(6):KaiC(6) and KaiC(6):KaiB(6):KaiA(12) are among the most important forms, many form cooperatively. Interacts directly with KaiB and SasA. The CI domain binds to KaiB and SasA; as they have a similar fold they compete for the same site on CI. CikA interacts with this protein in the clock complex. Binds to the C-terminus of KaiA via a coiled-coil structure. Forms KaiC(6):KaiB(1) and KaiC(6):KaiB(6) complexes. It depends on Mg(2+) as a cofactor. Has a 4 step phosphorylation cycle; the autokinase acts first on Thr-432, then Ser-431. When Ser-431 is modified KaiC switches to an autophosphatase mode, acting first on phospho-Thr-432 then phospho-Ser-431. Phosphorylated and dephosphorylated on serine/threonine residues by autocatalysis. Unphosphorylated, mono- and di-phosphorylated forms exist. The phosphorylated form correlates with clock speed. The presence of KaiA increases phosphorylation and stabilizes these forms. In terms of processing, phosphorylated on serine and threonine residues by autocatalysis. Has a 4 step phosphorylation cycle; the autokinase acts first on Thr-432, then Ser-431. When Ser-431 is modified KaiC switches to an autophosphatase mode, acting first on phospho-Thr-432 then phospho-Ser-431.

It catalyses the reaction L-seryl-[protein] + ATP = O-phospho-L-seryl-[protein] + ADP + H(+). It carries out the reaction L-threonyl-[protein] + ATP = O-phospho-L-threonyl-[protein] + ADP + H(+). The catalysed reaction is ATP + H2O = ADP + phosphate + H(+). With respect to regulation, interaction with KaiA stimulates autophosphorylation, KaiC interaction with KaiB sequesters KaiA, preventing it stimulating the KaiC kinase, leading to autodephosphorylation. A KaiA dimer is sufficient to enhance KaiC phosphorylation. Interaction of KaiA with the A-loop stimulates autokinase activity. In terms of biological role, the KaiABC oscillator complex constitutes the main circadian regulator in cyanobacteria. Complex composition changes during the circadian cycle to control KaiC phosphorylation; KaiA stimulates KaiC autophosphorylation, while KaiB sequesters KaiA, leading to KaiC autodephosphorylation. The Kai complex controls chromosome condensation, leading to a transcription accessible chromosome during the first half of the circadian cycle and a compact, less transcription-accessible chromosome during the latter half. Clock output pathways impact the RpaA transcriptional regulator. Circadian oscillations can be generated in vitro by incubating KaiA, KaiB and KaiC with 1 mM ATP. The cycle is self-sustainable for at least 3 cycles and resistant to temperature changes. Mutations in KaiC alone prolong or reduce the circadian rhythm. A very robust clock is reconstituted with KaiA, KaiB, KaiC, SasA, CikA and RpaA; output is measured by transcription from an appropriate reporter. Its function is as follows. The level of KaiC phosphorylation and KaiC ATPase activity represent the key features of the biochemical oscillator. KaiA homodimer binding to the KaiC CII domain stimulates KaiC's ATPase activity and forms KaiA(2-4):KaiC(6) complexes, which stimulate KaiC autophosphorylation first on Thr-432 then Ser-431. Phospho-Ser-431-KaiC accumulation triggers binding of KaiB to CI to form the KaiB(6):KaiC(6) complex, leading to changes in the output regulators CikA and SasA. KaiB(6):KaiC(6) formation exposes a site for KaiA binding that sequesters KaiA from the CII domain, making the KaiC(6):KaiB(6):KaiA(12) complex that results in KaiC autodephosphorylation. Complete dephosphorylation of KaiC leads to dissociation of KaiA(2):KaiB(1), completing 1 cycle of the Kai oscillator. Has a weak, temperature-independent ATPase activity (about 15 molecules of ATP per day); the addition of KaiA and KaiB increases activity slightly and makes the activity oscillate with a circadian period in vitro for over 60 hours. ATPase activity defines the circadian period. The phosphorylation state of KaiC modulates its ATPase activity and effects KaiB binding. Functionally, there are several clock output pathways; SasA/RpaA, CikA/RpaA and LabA. KaiC enhances the autophosphorylation activity of SasA, which then transfers its phosphate group to RpaA to activate it. Phosphotransfer is maximal when KaiC phosphorylation is active during the circadian cycle. KaiB and KaiC together enhance the phosphatase activity of CikA on phospho-RpaA. In terms of biological role, kaiC is important for metabolic partitioning during the dark to light shift, modulating the balance between the Calvin cycle and oxidative pentose phosphate pathway under natural growth conditions. The sequence is that of Circadian clock oscillator protein KaiC from Synechococcus elongatus (strain ATCC 33912 / PCC 7942 / FACHB-805) (Anacystis nidulans R2).